A 71-amino-acid chain; its full sequence is Protein MMP24OS (71 aa).

The span at methionine 1 to glycine 10 shows a compositional bias: gly residues. A disordered region spans residues methionine 1–valine 61. Residues histidine 36 to tryptophan 55 show a composition bias toward pro residues.

The chain is Protein MMP24OS from Homo sapiens (Human).